A 163-amino-acid chain; its full sequence is Endoribonuclease YbeY (163 aa).

Positions 119, 123, and 129 each coordinate Zn(2+).

It belongs to the endoribonuclease YbeY family. Zn(2+) serves as cofactor.

It localises to the cytoplasm. Single strand-specific metallo-endoribonuclease involved in late-stage 70S ribosome quality control and in maturation of the 3' terminus of the 16S rRNA. In Actinobacillus pleuropneumoniae serotype 5b (strain L20), this protein is Endoribonuclease YbeY.